The sequence spans 338 residues: Lipoate-protein ligase A (338 aa).

Positions 29–216 (PATQRVLFLW…AFFAHYGERV (188 aa)) constitute a BPL/LPL catalytic domain. Residues arginine 71, 76–79 (GAVF), and lysine 134 each bind ATP. Position 134 (lysine 134) interacts with (R)-lipoate.

Belongs to the LplA family. As to quaternary structure, monomer.

It is found in the cytoplasm. The catalysed reaction is L-lysyl-[lipoyl-carrier protein] + (R)-lipoate + ATP = N(6)-[(R)-lipoyl]-L-lysyl-[lipoyl-carrier protein] + AMP + diphosphate + H(+). The protein operates within protein modification; protein lipoylation via exogenous pathway; protein N(6)-(lipoyl)lysine from lipoate: step 1/2. Its pathway is protein modification; protein lipoylation via exogenous pathway; protein N(6)-(lipoyl)lysine from lipoate: step 2/2. Functionally, catalyzes both the ATP-dependent activation of exogenously supplied lipoate to lipoyl-AMP and the transfer of the activated lipoyl onto the lipoyl domains of lipoate-dependent enzymes. The protein is Lipoate-protein ligase A of Escherichia coli O8 (strain IAI1).